Reading from the N-terminus, the 1219-residue chain is Disease resistance-like protein DSC1 (1219 aa).

A TIR domain is found at 9–176 (AEFDVFLSFR…EIAVDTFKKL (168 aa)). E83 is a catalytic residue. Residues 197–446 (LEKLLSWEDL…DIACFFRSEN (250 aa)) form the NB-ARC domain. An ATP-binding site is contributed by 216–222 (GMVGIGK). LRR repeat units follow at residues 468–493 (LVDK…MAKE), 538–563 (TDKI…AFQG), 597–619 (PNEL…DFDP), 620–642 (KNLV…EKDV), 665–689 (AHNL…INCL), 690–713 (EKLI…IKTQ), 733–757 (SENV…QTFR), 759–780 (LALL…LYKL), 804–827 (MESL…MHLS), 854–877 (CSRL…IGGL), and 878–899 (SSLQ…SFNQ).

This sequence belongs to the disease resistance NB-LRR family. Interacts with CAMTA3 and DSC2.

The enzyme catalyses NAD(+) + H2O = ADP-D-ribose + nicotinamide + H(+). TIR-NB-LRR receptor-like protein involved in plant defense. Acts as a trigger of hypersensitive response (HR). Functions as a guard of CAMTA3, a negative regulator of immunity, during pathogen infection. The protein is Disease resistance-like protein DSC1 of Arabidopsis thaliana (Mouse-ear cress).